We begin with the raw amino-acid sequence, 790 residues long: Sodium- and chloride-dependent glycine transporter 2 (790 aa).

Residues 1–39 (MDYVNVVDGSKKTMNSPEGAAPGLIGATGITNPTPDNDL) are disordered. The Cytoplasmic portion of the chain corresponds to 1–192 (MDYVNVVDGS…ARGNWSNKLD (192 aa)). The next 3 membrane-spanning stretches (helical) occupy residues 193 to 213 (FILS…FPYL), 220 to 240 (GAFL…IFYL), and 264 to 284 (GCGI…NIIM). Gly-199, Ala-201, Val-202, and Asn-206 together coordinate Na(+). Over 285-387 (CYTIFYLFAS…GIEYPGEIRW (103 aa)) the chain is Extracellular. The cysteines at positions 304 and 313 are disulfide-linked. N-linked (GlcNAc...) asparagine glycans are attached at residues Asn-336, Asn-346, Asn-351, and Asn-357. A run of 3 helical transmembrane segments spans residues 388–408 (PLVF…AKGI), 427–447 (VILL…WWFI), and 463–483 (AATQ…TLSS). Ser-470 and Asn-502 together coordinate Na(+). A run of 6 helical transmembrane segments spans residues 504 to 524 (ATSI…AHIL), 556 to 576 (WAII…FATI), 597 to 617 (LFTL…ITQG), 631 to 651 (SYSL…IYGL), 672 to 692 (ICWA…SFYQ), and 708 to 728 (MVMG…MFVI). Residues Leu-567 and Asp-570 each coordinate Na(+). Residues 729-790 (KMFLAPGTFI…PKDFELGTQC (62 aa)) are Cytoplasmic-facing.

It belongs to the sodium:neurotransmitter symporter (SNF) (TC 2.A.22) family. SLC6A5 subfamily. First expressed in late neurula stages in the anterior spinal cord, where expression intensifies through the tailbud stages, and by hatching, expression is seen in the hindbrain. During late hatching stages, expression extends along most of the length of the spinal cord, mildly intensifies in the hindbrain, and appears in localized regions of the lateral forebrain and medial midbrain. By the swimming tadpole stage, weak expression appears in the anterior hindbrain, with stronger expression in the posterior, postmitotic neurons.

Its subcellular location is the cell membrane. The catalysed reaction is glycine(out) + chloride(out) + 3 Na(+)(out) = glycine(in) + chloride(in) + 3 Na(+)(in). Functionally, sodium- and chloride-dependent glycine transporter. Terminates the action of glycine by its high affinity sodium-dependent reuptake into presynaptic terminals. May be responsible for the termination of neurotransmission at strychnine-sensitive glycinergic synapses. The sequence is that of Sodium- and chloride-dependent glycine transporter 2 from Xenopus laevis (African clawed frog).